The sequence spans 207 residues: N-(5'-phosphoribosyl)anthranilate isomerase (207 aa).

The protein belongs to the TrpF family.

The enzyme catalyses N-(5-phospho-beta-D-ribosyl)anthranilate = 1-(2-carboxyphenylamino)-1-deoxy-D-ribulose 5-phosphate. The protein operates within amino-acid biosynthesis; L-tryptophan biosynthesis; L-tryptophan from chorismate: step 3/5. The chain is N-(5'-phosphoribosyl)anthranilate isomerase from Staphylococcus epidermidis (strain ATCC 35984 / DSM 28319 / BCRC 17069 / CCUG 31568 / BM 3577 / RP62A).